The chain runs to 211 residues: Protein-L-isoaspartate O-methyltransferase (211 aa).

Serine 62 is an active-site residue.

This sequence belongs to the methyltransferase superfamily. L-isoaspartyl/D-aspartyl protein methyltransferase family.

Its subcellular location is the cytoplasm. It carries out the reaction [protein]-L-isoaspartate + S-adenosyl-L-methionine = [protein]-L-isoaspartate alpha-methyl ester + S-adenosyl-L-homocysteine. Functionally, catalyzes the methyl esterification of L-isoaspartyl residues in peptides and proteins that result from spontaneous decomposition of normal L-aspartyl and L-asparaginyl residues. It plays a role in the repair and/or degradation of damaged proteins. This is Protein-L-isoaspartate O-methyltransferase from Shewanella oneidensis (strain ATCC 700550 / JCM 31522 / CIP 106686 / LMG 19005 / NCIMB 14063 / MR-1).